The sequence spans 246 residues: Putative carboxymethylenebutenolidase (246 aa).

Residues cysteine 127, aspartate 183, and histidine 215 contribute to the active site.

It belongs to the dienelactone hydrolase family.

It catalyses the reaction 2-(5-oxo-2,5-dihydrofuran-2-ylidene)acetate + H2O = 4-oxohex-2-enedioate + H(+). The sequence is that of Putative carboxymethylenebutenolidase from Synechocystis sp. (strain ATCC 27184 / PCC 6803 / Kazusa).